Here is a 96-residue protein sequence, read N- to C-terminus: Large ribosomal subunit protein eL14 (96 aa).

The protein belongs to the eukaryotic ribosomal protein eL14 family.

The chain is Large ribosomal subunit protein eL14 from Saccharolobus islandicus (strain M.14.25 / Kamchatka #1) (Sulfolobus islandicus).